We begin with the raw amino-acid sequence, 194 residues long: Imidazoleglycerol-phosphate dehydratase (194 aa).

The protein belongs to the imidazoleglycerol-phosphate dehydratase family.

It localises to the cytoplasm. The enzyme catalyses D-erythro-1-(imidazol-4-yl)glycerol 3-phosphate = 3-(imidazol-4-yl)-2-oxopropyl phosphate + H2O. Its pathway is amino-acid biosynthesis; L-histidine biosynthesis; L-histidine from 5-phospho-alpha-D-ribose 1-diphosphate: step 6/9. In Caldicellulosiruptor saccharolyticus (strain ATCC 43494 / DSM 8903 / Tp8T 6331), this protein is Imidazoleglycerol-phosphate dehydratase.